Consider the following 449-residue polypeptide: Tubulin alpha chain (449 aa).

GTP-binding residues include Q11, E71, S140, G144, T145, T179, N206, and N228. E71 serves as a coordination point for Mg(2+). E254 is an active-site residue.

Belongs to the tubulin family. As to quaternary structure, dimer of alpha and beta chains. A typical microtubule is a hollow water-filled tube with an outer diameter of 25 nm and an inner diameter of 15 nM. Alpha-beta heterodimers associate head-to-tail to form protofilaments running lengthwise along the microtubule wall with the beta-tubulin subunit facing the microtubule plus end conferring a structural polarity. Microtubules usually have 13 protofilaments but different protofilament numbers can be found in some organisms and specialized cells. It depends on Mg(2+) as a cofactor.

The protein resides in the cytoplasm. It localises to the cytoskeleton. It carries out the reaction GTP + H2O = GDP + phosphate + H(+). Tubulin is the major constituent of microtubules, a cylinder consisting of laterally associated linear protofilaments composed of alpha- and beta-tubulin heterodimers. Microtubules grow by the addition of GTP-tubulin dimers to the microtubule end, where a stabilizing cap forms. Below the cap, tubulin dimers are in GDP-bound state, owing to GTPase activity of alpha-tubulin. In Pneumocystis carinii, this protein is Tubulin alpha chain (TUB1).